We begin with the raw amino-acid sequence, 535 residues long: KNR4/SMI1 homolog (535 aa).

Residues 354 to 363 (ERKLPEEPKR) show a composition bias toward basic and acidic residues. The interval 354 to 535 (ERKLPEEPKR…LKDDFENVAL (182 aa)) is disordered. Composition is skewed to polar residues over residues 364 to 384 (TVSS…QETA), 397 to 407 (TSLSVDNTGTK), and 456 to 469 (ESTN…TSQE). Positions 474-483 (TSEKPEEKPK) are enriched in basic and acidic residues. Basic residues predominate over residues 484-494 (KQSKKASKKKG). Basic and acidic residues-rich tracts occupy residues 495 to 509 (KKDE…TKEP) and 524 to 535 (EKLKDDFENVAL).

It belongs to the KNR4/SMI1 family.

This Kluyveromyces lactis (strain ATCC 8585 / CBS 2359 / DSM 70799 / NBRC 1267 / NRRL Y-1140 / WM37) (Yeast) protein is KNR4/SMI1 homolog.